Reading from the N-terminus, the 488-residue chain is Malonate-semialdehyde dehydrogenase (488 aa).

Alanine 150, phenylalanine 152, lysine 176, glutamate 179, arginine 180, serine 229, and threonine 251 together coordinate NAD(+). Cysteine 284 acts as the Nucleophile in catalysis. Glutamate 382 contributes to the NAD(+) binding site.

It belongs to the aldehyde dehydrogenase family. IolA subfamily. In terms of assembly, homotetramer.

It catalyses the reaction 3-oxopropanoate + NAD(+) + CoA + H2O = hydrogencarbonate + acetyl-CoA + NADH + H(+). It carries out the reaction 2-methyl-3-oxopropanoate + NAD(+) + CoA + H2O = propanoyl-CoA + hydrogencarbonate + NADH + H(+). Its pathway is polyol metabolism; myo-inositol degradation into acetyl-CoA; acetyl-CoA from myo-inositol: step 7/7. Its function is as follows. Catalyzes the oxidation of malonate semialdehyde (MSA) and methylmalonate semialdehyde (MMSA) into acetyl-CoA and propanoyl-CoA, respectively. Is involved in a myo-inositol catabolic pathway. Bicarbonate, and not CO2, is the end-product of the enzymatic reaction. The polypeptide is Malonate-semialdehyde dehydrogenase (Listeria monocytogenes serotype 4b (strain F2365)).